The following is a 196-amino-acid chain: Imidazole glycerol phosphate synthase subunit HisH (196 aa).

The region spanning 2–196 is the Glutamine amidotransferase type-1 domain; the sequence is NIVIIDTNCS…QQLVKNFLEI (195 aa). The Nucleophile role is filled by Cys-77. Residues His-178 and Glu-180 contribute to the active site.

As to quaternary structure, heterodimer of HisH and HisF.

The protein localises to the cytoplasm. It catalyses the reaction 5-[(5-phospho-1-deoxy-D-ribulos-1-ylimino)methylamino]-1-(5-phospho-beta-D-ribosyl)imidazole-4-carboxamide + L-glutamine = D-erythro-1-(imidazol-4-yl)glycerol 3-phosphate + 5-amino-1-(5-phospho-beta-D-ribosyl)imidazole-4-carboxamide + L-glutamate + H(+). It carries out the reaction L-glutamine + H2O = L-glutamate + NH4(+). The protein operates within amino-acid biosynthesis; L-histidine biosynthesis; L-histidine from 5-phospho-alpha-D-ribose 1-diphosphate: step 5/9. IGPS catalyzes the conversion of PRFAR and glutamine to IGP, AICAR and glutamate. The HisH subunit catalyzes the hydrolysis of glutamine to glutamate and ammonia as part of the synthesis of IGP and AICAR. The resulting ammonia molecule is channeled to the active site of HisF. This is Imidazole glycerol phosphate synthase subunit HisH from Blochmanniella pennsylvanica (strain BPEN).